Reading from the N-terminus, the 1100-residue chain is Regulator of nonsense transcripts 1 (1100 aa).

Low complexity predominate over residues 42–53; it reads SQTQTQGQTQSQ. The segment at 42 to 67 is disordered; that stretch reads SQTQTQGQTQSQLDNQVNGPDGVLPN. The region spanning 94–251 is the Upf1 CH-rich domain; sequence TKDLPVHACS…NKLEELWKEN (158 aa). 12 residues coordinate Zn(2+): Cys-102, Cys-105, Cys-116, Ser-119, Cys-124, His-134, His-138, Cys-144, Cys-162, Cys-165, Cys-188, and Cys-192. Positions 102 to 134 are C3H; that stretch reads CSYCGIHDPACVVYCNTSKKWFCNGRGNTSGSH. The tract at residues 116 to 144 is CC/SHH/C; that stretch reads CNTSKKWFCNGRGNTSGSHIVNHLVRAKC. Residues 162–192 form a C4 region; that stretch reads CYNCGCRNVFLLGFIPAKADSVVVLLCRQPC. ATP-binding positions include Gln-455, 475-479, Gln-645, Tyr-682, and Glu-813; that span reads GTGKT. Positions 978–1065 are disordered; sequence LGQVNGPAAG…QPELSQDSYL (88 aa). Positions 982–993 are enriched in low complexity; sequence NGPAAGRGAPKG. The span at 1012-1063 shows a compositional bias: polar residues; that stretch reads SGQPNMPNSQASQDLVSQPFSQGPLTQGYITMSQPSQMSQPGLSQPELSQDS.

It belongs to the DNA2/NAM7 helicase family.

It localises to the cytoplasm. Its subcellular location is the P-body. The protein localises to the nucleus. The protein resides in the perinuclear region. RNA-dependent helicase and ATPase required for nonsense-mediated decay (NMD) of mRNAs containing premature stop codons. Is recruited to mRNAs upon translation termination and undergoes a cycle of phosphorylation and dephosphorylation; its phosphorylation appears to be a key step in NMD. The formation of an upf1-upf2-upf3 surveillance complex is believed to activate NMD. The polypeptide is Regulator of nonsense transcripts 1 (Danio rerio (Zebrafish)).